An 86-amino-acid chain; its full sequence is MKTLLLTLVVVTIVCLDLGYTLTCLNCPEMFCGKFQTCRNGEKICFKKLQQRRPFSLRYIRGCAATCPGTKPRDMVECCSTDRCNR.

An N-terminal signal peptide occupies residues 1 to 21; that stretch reads MKTLLLTLVVVTIVCLDLGYT. Disulfide bonds link C24/C45, C27/C32, C38/C63, C67/C78, and C79/C84.

The protein belongs to the three-finger toxin family. Ancestral subfamily. Orphan group II sub-subfamily. As to expression, expressed by the venom gland.

It localises to the secreted. Functionally, binds with low affinity to muscular and very low affinity to neuronal (alpha-7/CHRNA7) nicotinic acetylcholine receptor (nAChR). The protein is Weak neurotoxin 5 of Naja sputatrix (Malayan spitting cobra).